A 298-amino-acid polypeptide reads, in one-letter code: Tyrosine recombinase XerC (298 aa).

Residues 1 to 84 (MNHIQDAFLN…TLRTFYEYWM (84 aa)) enclose the Core-binding (CB) domain. The Tyr recombinase domain maps to 105–286 (YLPQFFYEEE…SNQQLRKVYL (182 aa)). Active-site residues include R145, K169, H238, R241, and H264. The active-site O-(3'-phospho-DNA)-tyrosine intermediate is the Y273.

The protein belongs to the 'phage' integrase family. XerC subfamily. Forms a cyclic heterotetrameric complex composed of two molecules of XerC and two molecules of XerD.

It is found in the cytoplasm. In terms of biological role, site-specific tyrosine recombinase, which acts by catalyzing the cutting and rejoining of the recombining DNA molecules. The XerC-XerD complex is essential to convert dimers of the bacterial chromosome into monomers to permit their segregation at cell division. It also contributes to the segregational stability of plasmids. This Staphylococcus aureus (strain USA300) protein is Tyrosine recombinase XerC.